The chain runs to 483 residues: V-type proton ATPase subunit H (483 aa).

The residue at position 483 (Ser-483) is a Phosphoserine.

It belongs to the V-ATPase H subunit family. In terms of assembly, V-ATPase is a heteromultimeric enzyme made up of two complexes: the ATP-hydrolytic V1 complex and the proton translocation V0 complex. The V1 complex consists of three catalytic AB heterodimers that form a heterohexamer, three peripheral stalks each consisting of EG heterodimers, one central rotor including subunits D and F, and the regulatory subunits C and H. The proton translocation complex V0 consists of the proton transport subunit a, a ring of proteolipid subunits c9c'', rotary subunit d, subunits e and f, and the accessory subunits ATP6AP1/Ac45 and ATP6AP2/PRR. Interacts with AP2M1. Expressed in brain (at protein level).

It localises to the cytoplasmic vesicle. The protein resides in the clathrin-coated vesicle membrane. Functionally, subunit of the V1 complex of vacuolar(H+)-ATPase (V-ATPase), a multisubunit enzyme composed of a peripheral complex (V1) that hydrolyzes ATP and a membrane integral complex (V0) that translocates protons. V-ATPase is responsible for acidifying and maintaining the pH of intracellular compartments and in some cell types, is targeted to the plasma membrane, where it is responsible for acidifying the extracellular environment. Subunit H is essential for V-ATPase activity, but not for the assembly of the complex. Involved in the endocytosis mediated by clathrin-coated pits, required for the formation of endosomes. This Bos taurus (Bovine) protein is V-type proton ATPase subunit H (ATP6V1H).